The chain runs to 170 residues: NADH-quinone oxidoreductase subunit B (170 aa).

[4Fe-4S] cluster-binding residues include Cys37, Cys38, Cys102, and Cys131.

Belongs to the complex I 20 kDa subunit family. NDH-1 is composed of 14 different subunits. Subunits NuoB, C, D, E, F, and G constitute the peripheral sector of the complex. Requires [4Fe-4S] cluster as cofactor.

It localises to the cell inner membrane. It catalyses the reaction a quinone + NADH + 5 H(+)(in) = a quinol + NAD(+) + 4 H(+)(out). Its function is as follows. NDH-1 shuttles electrons from NADH, via FMN and iron-sulfur (Fe-S) centers, to quinones in the respiratory chain. The immediate electron acceptor for the enzyme in this species is believed to be ubiquinone. Couples the redox reaction to proton translocation (for every two electrons transferred, four hydrogen ions are translocated across the cytoplasmic membrane), and thus conserves the redox energy in a proton gradient. This is NADH-quinone oxidoreductase subunit B from Geobacter sulfurreducens (strain ATCC 51573 / DSM 12127 / PCA).